The following is a 148-amino-acid chain: Large ribosomal subunit protein bL28c (148 aa).

The transit peptide at 1–71 directs the protein to the chloroplast; that stretch reads MAASGMLISN…PLKPSLQPVA (71 aa).

As to quaternary structure, component of the chloroplast large ribosomal subunit (LSU). Mature 70S chloroplast ribosomes of higher plants consist of a small (30S) and a large (50S) subunit. The 30S small subunit contains 1 molecule of ribosomal RNA (16S rRNA) and 24 different proteins. The 50S large subunit contains 3 rRNA molecules (23S, 5S and 4.5S rRNA) and 33 different proteins.

It localises to the plastid. It is found in the chloroplast. Its function is as follows. Component of the chloroplast ribosome (chloro-ribosome), a dedicated translation machinery responsible for the synthesis of chloroplast genome-encoded proteins, including proteins of the transcription and translation machinery and components of the photosynthetic apparatus. The chain is Large ribosomal subunit protein bL28c (RPL28) from Spinacia oleracea (Spinach).